The sequence spans 274 residues: Sulfur carrier protein FdhD (274 aa).

The active-site Cysteine persulfide intermediate is the C121. F258–R263 contributes to the Mo-bis(molybdopterin guanine dinucleotide) binding site.

It belongs to the FdhD family.

Its subcellular location is the cytoplasm. In terms of biological role, required for formate dehydrogenase (FDH) activity. Acts as a sulfur carrier protein that transfers sulfur from IscS to the molybdenum cofactor prior to its insertion into FDH. The chain is Sulfur carrier protein FdhD from Yersinia pseudotuberculosis serotype O:3 (strain YPIII).